Here is an 88-residue protein sequence, read N- to C-terminus: uncharacterized protein (88 aa).

This is an uncharacterized protein from Orgyia pseudotsugata (Douglas-fir tussock moth).